Here is a 775-residue protein sequence, read N- to C-terminus: MILDVDYITEEGKPVIRLFKKENGKFKIEHDRTFRPYIYALLRDDSKIEEVKKITGERHGKIVRIVDVEKVEKKFLGKPITVWKLYLEHPQDVPTIREKVREHPAVVDIFEYDIPFAKRYLIDKGLIPMEGEEELKILAFDIETLYHEGEEFGKGPIIMISYADENEAKVITWKNIDLPYVEVVSSEREMIKRFLRIIREKDPDIIVTYNGDSFDFPYLAKRAEKLGIKLTIGRDGSEPKMQRIGDMTAVEVKGRIHFDLYHVITRTINLPTYTLEAVYEAIFGKPKEKVYADEIAKAWESGENLERVAKYSMEDAKATYELGKEFLPMEIQLSRLVGQPLWDVSRSSTGNLVEWFLLRKAYERNEVAPNKPSEEEYQRRLRESYTGGFVKEPEKGLWENIVYLDFRALYPSIIITHNVSPDTLNLEGCKNYDIAPQVGHKFCKDIPGFIPSLLGHLLEERQKIKTKMKETQDPIEKILLDYRQKAIKLLANSFYGYYGYAKARWYCKECAESVTAWGRKYIELVWKELEEKFGFKVLYIDTDGLYATIPGGESEEIKKKALEFVKYINSKLPGLLELEYEGFYKRGFFVTKKRYAVIDEEGKVITRGLEIVRRDWSEIAKETQARVLETILKHGDVEEAVRIVKEVIQKLANYEIPPEKLAIYEQITRPLHEYKAIGPHVAVAKKLAAKGVKIKPGMVIGYIVLRGDGPISNRAILAEEYDPKKHKYDAEYYIENQVLPAVLRILEGFGYRKEDLRYQKTRQVGLTSWLNIKKS.

This sequence belongs to the DNA polymerase type-B family. In terms of assembly, monomer.

The enzyme catalyses DNA(n) + a 2'-deoxyribonucleoside 5'-triphosphate = DNA(n+1) + diphosphate. Its activity is regulated as follows. An 11-mer corresponding to the PIP-box of RfcL inhibits DNA synthesis. In addition to polymerase activity, this DNA polymerase exhibits 3' to 5' exonuclease activity. The polypeptide is DNA polymerase (pol) (Pyrococcus furiosus (strain ATCC 43587 / DSM 3638 / JCM 8422 / Vc1)).